We begin with the raw amino-acid sequence, 373 residues long: 2-phosphonomethylmalate synthase (373 aa).

Residues leucine 5 to lysine 256 enclose the Pyruvate carboxyltransferase domain.

This sequence belongs to the alpha-IPM synthase/homocitrate synthase family.

The enzyme catalyses 3-phosphonopyruvate + acetyl-CoA + H2O = (R)-2-(phosphonomethyl)malate + CoA + H(+). It functions in the pathway antibiotic biosynthesis. Functionally, acyltransferase involved in the biosynthesis of the phosphonate antibiotic FR-900098, a potent antimalarial agent that acts as an inhibitor of 1-deoxy-D-xylulose 5-phosphate reductoisomerase (DXR), the first enzyme in the nonmevalonate pathway for isoprenoid biosynthesis. Catalyzes the condensation between acetyl-CoA and phosphonopyruvate to yield (R)-2-(phosphonomethyl)malate. This is 2-phosphonomethylmalate synthase from Streptomyces rubellomurinus (strain ATCC 31215).